The following is a 745-amino-acid chain: AP-3 complex subunit beta (745 aa).

Residue serine 638 is modified to Phosphoserine. The disordered stretch occupies residues 674 to 745 (YASETSESSE…TEPEPNYWQS (72 aa)). A compositionally biased stretch (acidic residues) spans 680-718 (ESSEGEYETSTSESEDEETDDTSQEEDNEKNSTPDEDTE).

The protein belongs to the adaptor complexes large subunit family. As to quaternary structure, adaptor protein complex 3 (AP-3) is a heterotetramer composed of 2 large adaptins (apl5 and apl6), a medium adaptin (apm3) and a small adaptin (aps3).

The protein localises to the golgi apparatus. Its subcellular location is the cytoplasmic vesicle. The protein resides in the clathrin-coated vesicle membrane. In terms of biological role, adaptins are components of the adaptor complexes which link clathrin to receptors in coated vesicles. Clathrin-associated protein complexes are believed to interact with the cytoplasmic tails of membrane proteins, leading to their selection and concentration. Beta adaptin is a subunit of the plasma membrane adaptor. The polypeptide is AP-3 complex subunit beta (apl6) (Schizosaccharomyces pombe (strain 972 / ATCC 24843) (Fission yeast)).